The following is a 513-amino-acid chain: ATP synthase subunit alpha (513 aa).

An ATP-binding site is contributed by 169–176 (GDRQCGKT).

Belongs to the ATPase alpha/beta chains family. In terms of assembly, F-type ATPases have 2 components, CF(1) - the catalytic core - and CF(0) - the membrane proton channel. CF(1) has five subunits: alpha(3), beta(3), gamma(1), delta(1), epsilon(1). CF(0) has three main subunits: a(1), b(2) and c(9-12). The alpha and beta chains form an alternating ring which encloses part of the gamma chain. CF(1) is attached to CF(0) by a central stalk formed by the gamma and epsilon chains, while a peripheral stalk is formed by the delta and b chains.

The protein localises to the cell inner membrane. It catalyses the reaction ATP + H2O + 4 H(+)(in) = ADP + phosphate + 5 H(+)(out). Functionally, produces ATP from ADP in the presence of a proton gradient across the membrane. The alpha chain is a regulatory subunit. This Burkholderia ambifaria (strain MC40-6) protein is ATP synthase subunit alpha.